A 147-amino-acid chain; its full sequence is uncharacterized protein (147 aa).

The 117-residue stretch at 4 to 120 folds into the CMP/dCMP-type deaminase domain; that stretch reads KWAKRFFQMA…EQTEDFLSRW (117 aa). Position 67 (His-67) interacts with Zn(2+). Residue Glu-69 is the Proton donor of the active site. The Zn(2+) site is built by Cys-92 and Cys-95.

This sequence belongs to the cytidine and deoxycytidylate deaminase family. Requires Zn(2+) as cofactor.

This is an uncharacterized protein from Aliivibrio fischeri (Vibrio fischeri).